The sequence spans 151 residues: Arginine repressor (151 aa).

Belongs to the ArgR family.

Its subcellular location is the cytoplasm. Its pathway is amino-acid biosynthesis; L-arginine biosynthesis [regulation]. Its function is as follows. Regulates arginine biosynthesis genes. This is Arginine repressor from Pelotomaculum thermopropionicum (strain DSM 13744 / JCM 10971 / SI).